Consider the following 165-residue polypeptide: Ribosome maturation factor RimM (165 aa).

The 72-residue stretch at 90-161 folds into the PRC barrel domain; that stretch reads EDEYFIVDLV…LITIRPSGEW (72 aa).

It belongs to the RimM family. In terms of assembly, binds ribosomal protein uS19.

The protein localises to the cytoplasm. Functionally, an accessory protein needed during the final step in the assembly of 30S ribosomal subunit, possibly for assembly of the head region. Essential for efficient processing of 16S rRNA. May be needed both before and after RbfA during the maturation of 16S rRNA. It has affinity for free ribosomal 30S subunits but not for 70S ribosomes. The sequence is that of Ribosome maturation factor RimM from Clostridium perfringens (strain ATCC 13124 / DSM 756 / JCM 1290 / NCIMB 6125 / NCTC 8237 / Type A).